Consider the following 344-residue polypeptide: Uroporphyrinogen decarboxylase (344 aa).

Substrate-binding positions include 26-30 (RQAGR), aspartate 76, tyrosine 152, serine 207, and histidine 323.

Belongs to the uroporphyrinogen decarboxylase family. As to quaternary structure, homodimer.

The protein resides in the cytoplasm. The catalysed reaction is uroporphyrinogen III + 4 H(+) = coproporphyrinogen III + 4 CO2. It participates in porphyrin-containing compound metabolism; protoporphyrin-IX biosynthesis; coproporphyrinogen-III from 5-aminolevulinate: step 4/4. Its function is as follows. Catalyzes the decarboxylation of four acetate groups of uroporphyrinogen-III to yield coproporphyrinogen-III. In Hyphomonas neptunium (strain ATCC 15444), this protein is Uroporphyrinogen decarboxylase.